A 577-amino-acid polypeptide reads, in one-letter code: Arginine--tRNA ligase (577 aa).

Residues 132-142 (ANPTGPLHVGH) carry the 'HIGH' region motif.

It belongs to the class-I aminoacyl-tRNA synthetase family. In terms of assembly, monomer.

Its subcellular location is the cytoplasm. It carries out the reaction tRNA(Arg) + L-arginine + ATP = L-arginyl-tRNA(Arg) + AMP + diphosphate. This Herminiimonas arsenicoxydans protein is Arginine--tRNA ligase.